A 320-amino-acid chain; its full sequence is Malate dehydrogenase (320 aa).

Residues glycine 10–glycine 15 and aspartate 34 each bind NAD(+). Substrate is bound by residues arginine 83 and arginine 89. NAD(+)-binding positions include asparagine 96 and isoleucine 119 to asparagine 121. The substrate site is built by asparagine 121 and arginine 152. Histidine 176 serves as the catalytic Proton acceptor.

This sequence belongs to the LDH/MDH superfamily. MDH type 3 family.

It catalyses the reaction (S)-malate + NAD(+) = oxaloacetate + NADH + H(+). Functionally, catalyzes the reversible oxidation of malate to oxaloacetate. The protein is Malate dehydrogenase of Cereibacter sphaeroides (strain ATCC 17029 / ATH 2.4.9) (Rhodobacter sphaeroides).